Consider the following 148-residue polypeptide: FAD synthase (148 aa).

Residues 5 to 6 (TF), 10 to 13 (HPGH), Asp-92, and Tyr-119 each bind ATP.

Belongs to the archaeal FAD synthase family. Homodimer. A divalent metal cation serves as cofactor.

It carries out the reaction FMN + ATP + H(+) = FAD + diphosphate. Its pathway is cofactor biosynthesis; FAD biosynthesis; FAD from FMN: step 1/1. Its function is as follows. Catalyzes the transfer of the AMP portion of ATP to flavin mononucleotide (FMN) to produce flavin adenine dinucleotide (FAD) coenzyme. The polypeptide is FAD synthase (Methanosphaera stadtmanae (strain ATCC 43021 / DSM 3091 / JCM 11832 / MCB-3)).